We begin with the raw amino-acid sequence, 295 residues long: Tyrosine recombinase XerC (295 aa).

Residues 1-85 (MLTALNRYWD…ALRRFLSFLV (85 aa)) form the Core-binding (CB) domain. The 180-residue stretch at 106-285 (HLPKNMDGEQ…NFQHLAEVYD (180 aa)) folds into the Tyr recombinase domain. Catalysis depends on residues arginine 145, lysine 169, histidine 237, arginine 240, and histidine 263. Tyrosine 272 acts as the O-(3'-phospho-DNA)-tyrosine intermediate in catalysis.

The protein belongs to the 'phage' integrase family. XerC subfamily. Forms a cyclic heterotetrameric complex composed of two molecules of XerC and two molecules of XerD.

Its subcellular location is the cytoplasm. Functionally, site-specific tyrosine recombinase, which acts by catalyzing the cutting and rejoining of the recombining DNA molecules. The XerC-XerD complex is essential to convert dimers of the bacterial chromosome into monomers to permit their segregation at cell division. It also contributes to the segregational stability of plasmids. The chain is Tyrosine recombinase XerC from Haemophilus influenzae (strain 86-028NP).